The following is a 160-amino-acid chain: Endoribonuclease YbeY (160 aa).

Zn(2+)-binding residues include H112, H116, and H122. Positions 141-160 (ELGHPDPYACDDEEPPSKEK) are disordered.

This sequence belongs to the endoribonuclease YbeY family. Zn(2+) serves as cofactor.

Its subcellular location is the cytoplasm. Single strand-specific metallo-endoribonuclease involved in late-stage 70S ribosome quality control and in maturation of the 3' terminus of the 16S rRNA. This Pseudomonas aeruginosa (strain UCBPP-PA14) protein is Endoribonuclease YbeY.